A 345-amino-acid chain; its full sequence is Selenide, water dikinase (345 aa).

The active site involves Cys-16. ATP contacts are provided by residues Lys-19 and 45-47; that span reads TSE. Asp-48 contacts Mg(2+). Residues Asp-65, Asp-88, and 136-138 each bind ATP; that span reads GHT. Asp-88 is a Mg(2+) binding site. Asp-224 is a Mg(2+) binding site.

It belongs to the selenophosphate synthase 1 family. Class I subfamily. In terms of assembly, homodimer. It depends on Mg(2+) as a cofactor.

It catalyses the reaction hydrogenselenide + ATP + H2O = selenophosphate + AMP + phosphate + 2 H(+). Synthesizes selenophosphate from selenide and ATP. This Aliarcobacter butzleri (strain RM4018) (Arcobacter butzleri) protein is Selenide, water dikinase.